The chain runs to 234 residues: Carboxy-S-adenosyl-L-methionine synthase (234 aa).

Residues Tyr35, 60–62 (GCS), 83–84 (DN), 109–110 (DI), Asn124, and Arg191 each bind S-adenosyl-L-methionine.

The protein belongs to the class I-like SAM-binding methyltransferase superfamily. Cx-SAM synthase family. Homodimer.

It catalyses the reaction prephenate + S-adenosyl-L-methionine = carboxy-S-adenosyl-L-methionine + 3-phenylpyruvate + H2O. Catalyzes the conversion of S-adenosyl-L-methionine (SAM) to carboxy-S-adenosyl-L-methionine (Cx-SAM). The polypeptide is Carboxy-S-adenosyl-L-methionine synthase (Campylobacter concisus (strain 13826)).